The sequence spans 317 residues: Metaxin-1 (317 aa).

Residues K38, K41, and K78 each participate in a glycyl lysine isopeptide (Lys-Gly) (interchain with G-Cter in ubiquitin) cross-link. The chain crosses the membrane as a helical span at residues 164 to 184 (EELEKELYQEARECLTLLSQR).

The protein belongs to the metaxin family. Interacts with MTX2/metaxin-2. Associates with the mitochondrial contact site and cristae organizing system (MICOS) complex, composed of at least MICOS10/MIC10, CHCHD3/MIC19, CHCHD6/MIC25, APOOL/MIC27, IMMT/MIC60, APOO/MIC23/MIC26 and QIL1/MIC13. This complex was also known under the names MINOS or MitOS complex. The MICOS complex associates with mitochondrial outer membrane proteins SAMM50, MTX1 and MTX2 (together described as components of the mitochondrial outer membrane sorting assembly machinery (SAM) complex) and DNAJC11, mitochondrial inner membrane protein TMEM11 and with HSPA9. The MICOS and SAM complexes together with DNAJC11 are part of a large protein complex spanning both membranes termed the mitochondrial intermembrane space bridging (MIB) complex. Interacts with ARMC1. Ubiquitinated by PRKN during mitophagy, leading to its degradation and enhancement of mitophagy. Deubiquitinated by USP30.

It is found in the mitochondrion outer membrane. Involved in transport of proteins into the mitochondrion. Essential for embryonic development. The chain is Metaxin-1 (MTX1) from Sus scrofa (Pig).